We begin with the raw amino-acid sequence, 363 residues long: Holliday junction branch migration complex subunit RuvB (363 aa).

Positions 1–44 are disordered; it reads MAIKRNQGHGLPPKRDPALGRDALTTSQALPEDQEQSANEDRIR. The interval 13–204 is large ATPase domain (RuvB-L); sequence PKRDPALGRD…FGLIQRLRFY (192 aa). ATP contacts are provided by Ile-43, Arg-44, Gly-85, Lys-88, Thr-89, Thr-90, Arg-194, Tyr-204, and Arg-241. Position 89 (Thr-89) interacts with Mg(2+). The small ATPAse domain (RuvB-S) stretch occupies residues 205–275; sequence EVDELIAIVH…VAATALDLYN (71 aa). Positions 278–363 are head domain (RuvB-H); it reads ALGLDWTDRL…EQSTQLDFLP (86 aa). Positions 333 and 338 each coordinate DNA.

The protein belongs to the RuvB family. In terms of assembly, homohexamer. Forms an RuvA(8)-RuvB(12)-Holliday junction (HJ) complex. HJ DNA is sandwiched between 2 RuvA tetramers; dsDNA enters through RuvA and exits via RuvB. An RuvB hexamer assembles on each DNA strand where it exits the tetramer. Each RuvB hexamer is contacted by two RuvA subunits (via domain III) on 2 adjacent RuvB subunits; this complex drives branch migration. In the full resolvosome a probable DNA-RuvA(4)-RuvB(12)-RuvC(2) complex forms which resolves the HJ.

It localises to the cytoplasm. The catalysed reaction is ATP + H2O = ADP + phosphate + H(+). Its function is as follows. The RuvA-RuvB-RuvC complex processes Holliday junction (HJ) DNA during genetic recombination and DNA repair, while the RuvA-RuvB complex plays an important role in the rescue of blocked DNA replication forks via replication fork reversal (RFR). RuvA specifically binds to HJ cruciform DNA, conferring on it an open structure. The RuvB hexamer acts as an ATP-dependent pump, pulling dsDNA into and through the RuvAB complex. RuvB forms 2 homohexamers on either side of HJ DNA bound by 1 or 2 RuvA tetramers; 4 subunits per hexamer contact DNA at a time. Coordinated motions by a converter formed by DNA-disengaged RuvB subunits stimulates ATP hydrolysis and nucleotide exchange. Immobilization of the converter enables RuvB to convert the ATP-contained energy into a lever motion, pulling 2 nucleotides of DNA out of the RuvA tetramer per ATP hydrolyzed, thus driving DNA branch migration. The RuvB motors rotate together with the DNA substrate, which together with the progressing nucleotide cycle form the mechanistic basis for DNA recombination by continuous HJ branch migration. Branch migration allows RuvC to scan DNA until it finds its consensus sequence, where it cleaves and resolves cruciform DNA. The protein is Holliday junction branch migration complex subunit RuvB of Picosynechococcus sp. (strain ATCC 27264 / PCC 7002 / PR-6) (Agmenellum quadruplicatum).